Here is a 217-residue protein sequence, read N- to C-terminus: 25 kDa ookinete surface antigen (217 aa).

Residues Met1 to Ser16 form the signal peptide. One can recognise an EGF-like 1; truncated domain in the interval Cys30 to Glu59. EGF-like domains follow at residues Lys61–Ile106, Ile106–Ser150, and Gly153–Thr193. Disulfide bonds link Cys65/Cys80, Cys74/Cys92, Cys94/Cys105, Cys110/Cys120, Cys115/Cys133, Cys135/Cys149, Cys157/Cys168, Cys161/Cys177, and Cys179/Cys192. Asn112 carries an N-linked (GlcNAc...) asparagine glycan. 2 N-linked (GlcNAc...) asparagine glycosylation sites follow: Asn165 and Asn187. Ser196 carries the GPI-anchor amidated serine lipid modification. Residues Val197–Met217 constitute a propeptide, removed in mature form. An N-linked (GlcNAc...) asparagine glycan is attached at Asn202.

It localises to the cell membrane. This is 25 kDa ookinete surface antigen from Plasmodium reichenowi.